A 139-amino-acid chain; its full sequence is Holo-[acyl-carrier-protein] synthase (139 aa).

Residues D8 and E61 each contribute to the Mg(2+) site.

It belongs to the P-Pant transferase superfamily. AcpS family. Requires Mg(2+) as cofactor.

Its subcellular location is the cytoplasm. The catalysed reaction is apo-[ACP] + CoA = holo-[ACP] + adenosine 3',5'-bisphosphate + H(+). Transfers the 4'-phosphopantetheine moiety from coenzyme A to a Ser of acyl-carrier-protein. The sequence is that of Holo-[acyl-carrier-protein] synthase from Bradyrhizobium sp. (strain BTAi1 / ATCC BAA-1182).